A 217-amino-acid polypeptide reads, in one-letter code: CASP-like protein UU4 (217 aa).

The span at 1 to 11 shows a compositional bias: basic and acidic residues; it reads MYTGQSDHRPE. The disordered stretch occupies residues 1-21; the sequence is MYTGQSDHRPEGVGVNPGSPN. The Cytoplasmic segment spans residues 1–61; that stretch reads MYTGQSDHRP…VKKNINHMSG (61 aa). Residues 62–82 traverse the membrane as a helical segment; that stretch reads LSLGLRVSEFVLSVIAFSLMA. The Extracellular segment spans residues 83 to 98; that stretch reads SAEQNGAVYSTFTSYS. A helical membrane pass occupies residues 99 to 119; that stretch reads FVLAINVLVALYAIGQIILSV. The Cytoplasmic segment spans residues 120 to 141; that stretch reads MPLVSGSAPKKLYLFITFGCDQ. A helical transmembrane segment spans residues 142–162; that stretch reads LSAFLLMAAGAAGASVAMLIN. The Extracellular segment spans residues 163–187; it reads RKGVIDDYGSGCIDGKITVFCAHAE. Residues 188-208 form a helical membrane-spanning segment; it reads ASIAFTFLSFFCVMISSYLGV. Residues 209 to 217 are Cytoplasmic-facing; the sequence is YNLAPYLIL.

This sequence belongs to the Casparian strip membrane proteins (CASP) family. Homodimer and heterodimers.

The protein localises to the cell membrane. This chain is CASP-like protein UU4, found in Physcomitrium patens (Spreading-leaved earth moss).